The following is a 322-amino-acid chain: Lipoyl synthase (322 aa).

Residues Cys69, Cys74, Cys80, Cys95, Cys99, Cys102, and Ser309 each coordinate [4Fe-4S] cluster. The region spanning Phe81–Asp298 is the Radical SAM core domain.

Belongs to the radical SAM superfamily. Lipoyl synthase family. [4Fe-4S] cluster serves as cofactor.

The protein resides in the cytoplasm. The enzyme catalyses [[Fe-S] cluster scaffold protein carrying a second [4Fe-4S](2+) cluster] + N(6)-octanoyl-L-lysyl-[protein] + 2 oxidized [2Fe-2S]-[ferredoxin] + 2 S-adenosyl-L-methionine + 4 H(+) = [[Fe-S] cluster scaffold protein] + N(6)-[(R)-dihydrolipoyl]-L-lysyl-[protein] + 4 Fe(3+) + 2 hydrogen sulfide + 2 5'-deoxyadenosine + 2 L-methionine + 2 reduced [2Fe-2S]-[ferredoxin]. The protein operates within protein modification; protein lipoylation via endogenous pathway; protein N(6)-(lipoyl)lysine from octanoyl-[acyl-carrier-protein]: step 2/2. Catalyzes the radical-mediated insertion of two sulfur atoms into the C-6 and C-8 positions of the octanoyl moiety bound to the lipoyl domains of lipoate-dependent enzymes, thereby converting the octanoylated domains into lipoylated derivatives. The polypeptide is Lipoyl synthase (Psychromonas ingrahamii (strain DSM 17664 / CCUG 51855 / 37)).